The sequence spans 104 residues: Large ribosomal subunit protein uL23 (104 aa).

Belongs to the universal ribosomal protein uL23 family. As to quaternary structure, part of the 50S ribosomal subunit. Contacts protein L29, and trigger factor when it is bound to the ribosome.

One of the early assembly proteins it binds 23S rRNA. One of the proteins that surrounds the polypeptide exit tunnel on the outside of the ribosome. Forms the main docking site for trigger factor binding to the ribosome. In Nostoc punctiforme (strain ATCC 29133 / PCC 73102), this protein is Large ribosomal subunit protein uL23.